Reading from the N-terminus, the 89-residue chain is Small ribosomal subunit protein uS15 (89 aa).

It belongs to the universal ribosomal protein uS15 family. As to quaternary structure, part of the 30S ribosomal subunit. Forms a bridge to the 50S subunit in the 70S ribosome, contacting the 23S rRNA.

One of the primary rRNA binding proteins, it binds directly to 16S rRNA where it helps nucleate assembly of the platform of the 30S subunit by binding and bridging several RNA helices of the 16S rRNA. In terms of biological role, forms an intersubunit bridge (bridge B4) with the 23S rRNA of the 50S subunit in the ribosome. In Klebsiella pneumoniae (strain 342), this protein is Small ribosomal subunit protein uS15.